The following is a 149-amino-acid chain: Large ribosomal subunit protein bL9 (149 aa).

The protein belongs to the bacterial ribosomal protein bL9 family.

Functionally, binds to the 23S rRNA. This is Large ribosomal subunit protein bL9 (rplI) from Geobacillus stearothermophilus (Bacillus stearothermophilus).